A 372-amino-acid chain; its full sequence is B2 bradykinin receptor (372 aa).

Residues 1–34 are Extracellular-facing; it reads MFNITSQVSALNATLAQGNSCLDAEWWSWLNTIQ. Residues asparagine 3 and asparagine 12 are each glycosylated (N-linked (GlcNAc...) asparagine). A helical membrane pass occupies residues 35–58; sequence APFLWVLFVLAVLENIFVLSVFFL. Topologically, residues 59 to 67 are cytoplasmic; that stretch reads HKSSCTVAE. The helical transmembrane segment at 68-92 threads the bilayer; sequence IYLGNLAVADLILAFGLPFWAITIA. Over 93-105 the chain is Extracellular; it reads NNFDWLFGEVLCR. Cysteine 104 and cysteine 185 form a disulfide bridge. Residues 106–127 traverse the membrane as a helical segment; that stretch reads MVNTMIQMNMYSSICFLMLVSI. Residues 128-149 lie on the Cytoplasmic side of the membrane; it reads DRYLALVKTMSMGRMRGVRWAK. Tyrosine 130 bears the Phosphotyrosine mark. A helical transmembrane segment spans residues 150–172; sequence LYSLVIWGCALLLSSPMLVFRTM. The Extracellular portion of the chain corresponds to 173-195; it reads KDYRDEGHNVTACLIIYPSLTWQ. Residue asparagine 181 is glycosylated (N-linked (GlcNAc...) asparagine). The chain crosses the membrane as a helical span at residues 196–222; the sequence is VFTNVLLNLVGFLLPLSIITFCTVQIM. Topologically, residues 223 to 241 are cytoplasmic; it reads QVLRNNEMQKFKEIQTERR. A helical transmembrane segment spans residues 242 to 266; it reads ATVLVLAVLLLFVVCWLPFQIGTFL. At 267 to 284 the chain is on the extracellular side; that stretch reads DTLRLLGFLPGCWEHVID. Residues 285–308 form a helical membrane-spanning segment; that stretch reads LITQISSYLAYSNSCLNPLVYVIV. Over 309-364 the chain is Cytoplasmic; the sequence is GKRFRKKSREVYHGLCRSGGCVSEPAQSENSMGTLRTSISVDRQIHKLQDWARSSS. Phosphotyrosine is present on tyrosine 320. The S-palmitoyl cysteine moiety is linked to residue cysteine 324. Serine 339 carries the phosphoserine modification. At threonine 342 the chain carries Phosphothreonine. A phosphoserine; by GRK6 mark is found at serine 346 and serine 348.

The protein belongs to the G-protein coupled receptor 1 family. Bradykinin receptor subfamily. BDKRB2 sub-subfamily. As to quaternary structure, forms a complex with PECAM1 and GNAQ. Interacts with PECAM1.

It localises to the cell membrane. Receptor for bradykinin. It is associated with G proteins that activate a phosphatidylinositol-calcium second messenger system. The sequence is that of B2 bradykinin receptor (BDKRB2) from Cavia porcellus (Guinea pig).